Here is a 526-residue protein sequence, read N- to C-terminus: MSLRNSTTAKRFHSHKTWAGTFWSRPSLYFQPASIEELQAIVTRARDLGKTIMVVGSAHSPSDLTMTSQWLVNLDKLSKAVSFKPHTSGLYTDVTVEAGIRIHQLNEVLKRKGLAMQNLGSISDQSVAGIISTGTHGSSAYHGLVSQQIVSLTIMIASGELLTCSPDENPTLFRAALLSLGKLGIIVYATLRTVPAYTIHSTQHVITFETLIREWDNLWTASEYIRVWWFPYAERCILWRASKSELPLSAPRPSWYGTWLGRLFYETLLWVSVRLWPSLTPSVERFIFSRQYGMEDTLGSGTGSEAVQGSVEGLNMDCLFSQFVNEWGMPLDNGPDVLRALRAKIEAAAKDNIYYVHSPVEVRCSNMSVPDSGDRNVEPNTQEFSASRRGAITGNTLRPLLDINPRDRPYASPHGHVTNSNLTLYINATMYRPFGVNSPVGKWYRDFEGIVAEAGGKPHWAKNFLGPETAELKDNESEDGKMLGLKPIIDEWYGDDLKQWKSLREKYDPTGVFLSGKVWMDRNGLL.

The 175-residue stretch at 22 to 196 (FWSRPSLYFQ…VYATLRTVPA (175 aa)) folds into the FAD-binding PCMH-type domain. H59 bears the Pros-8alpha-FAD histidine mark.

This sequence belongs to the oxygen-dependent FAD-linked oxidoreductase family. FAD serves as cofactor.

Its subcellular location is the mitochondrion membrane. It catalyses the reaction D-arabinono-1,4-lactone + O2 = dehydro-D-arabinono-1,4-lactone + H2O2 + H(+). It participates in cofactor biosynthesis; D-erythroascorbate biosynthesis; dehydro-D-arabinono-1,4-lactone from D-arabinose: step 2/2. The chain is D-arabinono-1,4-lactone oxidase (ALO1) from Yarrowia lipolytica (strain CLIB 122 / E 150) (Yeast).